The sequence spans 271 residues: tRNA (guanine-N(1)-)-methyltransferase (271 aa).

S-adenosyl-L-methionine contacts are provided by residues Gly-120 and 145–150; that span reads IGDYVL.

Belongs to the RNA methyltransferase TrmD family. As to quaternary structure, homodimer.

The protein localises to the cytoplasm. It catalyses the reaction guanosine(37) in tRNA + S-adenosyl-L-methionine = N(1)-methylguanosine(37) in tRNA + S-adenosyl-L-homocysteine + H(+). Its function is as follows. Specifically methylates guanosine-37 in various tRNAs. The chain is tRNA (guanine-N(1)-)-methyltransferase from Bifidobacterium longum subsp. infantis (strain ATCC 15697 / DSM 20088 / JCM 1222 / NCTC 11817 / S12).